Here is a 134-residue protein sequence, read N- to C-terminus: Phosphoribosyl-AMP cyclohydrolase (134 aa).

Residue Asp-77 participates in Mg(2+) binding. Cys-78 contacts Zn(2+). Mg(2+)-binding residues include Asp-79 and Asp-81. Zn(2+)-binding residues include Cys-95 and Cys-102.

This sequence belongs to the PRA-CH family. In terms of assembly, homodimer. The cofactor is Mg(2+). It depends on Zn(2+) as a cofactor.

The protein resides in the cytoplasm. It carries out the reaction 1-(5-phospho-beta-D-ribosyl)-5'-AMP + H2O = 1-(5-phospho-beta-D-ribosyl)-5-[(5-phospho-beta-D-ribosylamino)methylideneamino]imidazole-4-carboxamide. It functions in the pathway amino-acid biosynthesis; L-histidine biosynthesis; L-histidine from 5-phospho-alpha-D-ribose 1-diphosphate: step 3/9. Catalyzes the hydrolysis of the adenine ring of phosphoribosyl-AMP. The sequence is that of Phosphoribosyl-AMP cyclohydrolase from Pseudomonas paraeruginosa (strain DSM 24068 / PA7) (Pseudomonas aeruginosa (strain PA7)).